Here is a 102-residue protein sequence, read N- to C-terminus: Large ribosomal subunit protein bL21 (102 aa).

It belongs to the bacterial ribosomal protein bL21 family. As to quaternary structure, part of the 50S ribosomal subunit. Contacts protein L20.

This protein binds to 23S rRNA in the presence of protein L20. The polypeptide is Large ribosomal subunit protein bL21 (Syntrophotalea carbinolica (strain DSM 2380 / NBRC 103641 / GraBd1) (Pelobacter carbinolicus)).